Reading from the N-terminus, the 539-residue chain is Acid-sensing ion channel 4 (539 aa).

At 1 to 68 (MPIEIVCKIK…GPGPHGLRRT (68 aa)) the chain is on the cytoplasmic side. A helical transmembrane segment spans residues 69 to 89 (LWALALLTSLAAFLYQAASLA). The Extracellular segment spans residues 90–438 (RGYLTRPHLV…EQQAAYGLSA (349 aa)). Cystine bridges form between Cys-118-Cys-202 and Cys-180-Cys-187. N-linked (GlcNAc...) asparagine glycosylation is found at Asn-191, Asn-243, Asn-341, and Asn-376. Disulfide bonds link Cys-296-Cys-375, Cys-318-Cys-371, Cys-322-Cys-369, Cys-331-Cys-353, and Cys-333-Cys-345. Residues 439–459 (LLGDLGGQMGLFIGASILTLL) form a helical membrane-spanning segment. Positions 452 to 454 (GAS) match the GAS motif; ion selectivity filter motif. At 460 to 539 (EILDYIYEVS…PGSLFEDFAC (80 aa)) the chain is on the cytoplasmic side. Residues 500–531 (KEQSPCPSRGRAEGGGASSLLPNHHHPHGPPG) are disordered.

This sequence belongs to the amiloride-sensitive sodium channel (TC 1.A.6) family. ASIC4 subfamily. Homotrimer. Heterotrimer; with other ASIC proteins producing functional channels.

The protein localises to the cell membrane. Its function is as follows. Does not exhibit measurable stand-alone pH-gated sodium channel activity but may form pH-gated heterotrimeric sodium channels. Its activity could also depend on alternative gating mechanisms. The sequence is that of Acid-sensing ion channel 4 from Mus musculus (Mouse).